A 653-amino-acid chain; its full sequence is tRNA 5-methylaminomethyl-2-thiouridine biosynthesis bifunctional protein MnmC (653 aa).

Residues 1 to 233 (MKTAPITPGR…KRDITVARFT (233 aa)) form a tRNA (mnm(5)s(2)U34)-methyltransferase region. An FAD-dependent cmnm(5)s(2)U34 oxidoreductase region spans residues 258–653 (IGAGLAGCAA…YALPRWRSDS (396 aa)).

In the N-terminal section; belongs to the methyltransferase superfamily. tRNA (mnm(5)s(2)U34)-methyltransferase family. The protein in the C-terminal section; belongs to the DAO family. It depends on FAD as a cofactor.

Its subcellular location is the cytoplasm. It carries out the reaction 5-aminomethyl-2-thiouridine(34) in tRNA + S-adenosyl-L-methionine = 5-methylaminomethyl-2-thiouridine(34) in tRNA + S-adenosyl-L-homocysteine + H(+). Its function is as follows. Catalyzes the last two steps in the biosynthesis of 5-methylaminomethyl-2-thiouridine (mnm(5)s(2)U) at the wobble position (U34) in tRNA. Catalyzes the FAD-dependent demodification of cmnm(5)s(2)U34 to nm(5)s(2)U34, followed by the transfer of a methyl group from S-adenosyl-L-methionine to nm(5)s(2)U34, to form mnm(5)s(2)U34. The polypeptide is tRNA 5-methylaminomethyl-2-thiouridine biosynthesis bifunctional protein MnmC (Methylibium petroleiphilum (strain ATCC BAA-1232 / LMG 22953 / PM1)).